Consider the following 142-residue polypeptide: Large ribosomal subunit protein bL17 (142 aa).

The protein belongs to the bacterial ribosomal protein bL17 family. In terms of assembly, part of the 50S ribosomal subunit. Contacts protein L32.

The protein is Large ribosomal subunit protein bL17 of Brucella canis (strain ATCC 23365 / NCTC 10854 / RM-666).